The following is a 686-amino-acid chain: Translation initiation factor IF-2 (686 aa).

Residues 54–105 (KPSVADEFEVEEKVVRSKKNSNKKKKKGKGNEDKRQENFAGRQQTQTVETPD) are disordered. The span at 69–81 (RSKKNSNKKKKKG) shows a compositional bias: basic residues. Residues 188–357 (ERPAVVTIMG…LLVSEVEEYK (170 aa)) enclose the tr-type G domain. Residues 197 to 204 (GHVDHGKT) form a G1 region. 197 to 204 (GHVDHGKT) serves as a coordination point for GTP. Residues 222–226 (GITQH) are G2. The tract at residues 243-246 (DTPG) is G3. GTP-binding positions include 243–247 (DTPGH) and 297–300 (NKMD). The G4 stretch occupies residues 297–300 (NKMD). The tract at residues 333 to 335 (SAI) is G5.

It belongs to the TRAFAC class translation factor GTPase superfamily. Classic translation factor GTPase family. IF-2 subfamily.

It is found in the cytoplasm. Its function is as follows. One of the essential components for the initiation of protein synthesis. Protects formylmethionyl-tRNA from spontaneous hydrolysis and promotes its binding to the 30S ribosomal subunits. Also involved in the hydrolysis of GTP during the formation of the 70S ribosomal complex. The polypeptide is Translation initiation factor IF-2 (Bacillus cereus (strain 03BB102)).